The primary structure comprises 740 residues: ATP-dependent DNA helicase Hel308 (740 aa).

ATP contacts are provided by residues Q28 and 46–53; that span reads IPTASGKT. In terms of domain architecture, Helicase ATP-binding spans 33-204; it reads RQGLLDGKNL…WMDAALVQSE (172 aa). The DEAH box motif lies at 149–152; it reads DEVH. Residues 236–436 form the Helicase C-terminal domain; it reads EVNSLVADTL…EPAMRAHALS (201 aa). The tract at residues 716–740 is disordered; it reads VDHTPPETEEQPQVSGQSTLFSFDG. Residues 726–740 are compositionally biased toward polar residues; sequence QPQVSGQSTLFSFDG.

The protein belongs to the helicase family. Hel308 subfamily. Monomer.

It catalyses the reaction Couples ATP hydrolysis with the unwinding of duplex DNA by translocating in the 3'-5' direction.. The catalysed reaction is ATP + H2O = ADP + phosphate + H(+). In terms of biological role, DNA-dependent ATPase and 3'-5' DNA helicase that may be involved in repair of stalled replication forks. In Methanocella arvoryzae (strain DSM 22066 / NBRC 105507 / MRE50), this protein is ATP-dependent DNA helicase Hel308.